The chain runs to 182 residues: Ribosome-recycling factor (182 aa).

Residues Val136–Glu160 are disordered.

This sequence belongs to the RRF family.

Its subcellular location is the cytoplasm. Its function is as follows. Responsible for the release of ribosomes from messenger RNA at the termination of protein biosynthesis. May increase the efficiency of translation by recycling ribosomes from one round of translation to another. The polypeptide is Ribosome-recycling factor (Prochlorococcus marinus (strain NATL2A)).